We begin with the raw amino-acid sequence, 80 residues long: Putative membrane protein insertion efficiency factor (80 aa).

Positions 61-80 are disordered; that stretch reads KTGKDPIPDHFSLKRNQEGE. Residues 62–80 show a composition bias toward basic and acidic residues; the sequence is TGKDPIPDHFSLKRNQEGE.

It belongs to the UPF0161 family.

It is found in the cell membrane. In terms of biological role, could be involved in insertion of integral membrane proteins into the membrane. This chain is Putative membrane protein insertion efficiency factor, found in Streptococcus pneumoniae (strain CGSP14).